We begin with the raw amino-acid sequence, 512 residues long: 2,3-bisphosphoglycerate-independent phosphoglycerate mutase (512 aa).

Mn(2+) contacts are provided by aspartate 18 and serine 68. Serine 68 (phosphoserine intermediate) is an active-site residue. Substrate is bound by residues histidine 129, 159–160 (RD), arginine 191, arginine 197, 265–268 (RPDR), and lysine 338. Positions 403, 407, 444, 445, and 462 each coordinate Mn(2+).

It belongs to the BPG-independent phosphoglycerate mutase family. Monomer. Mn(2+) serves as cofactor.

It catalyses the reaction (2R)-2-phosphoglycerate = (2R)-3-phosphoglycerate. Its pathway is carbohydrate degradation; glycolysis; pyruvate from D-glyceraldehyde 3-phosphate: step 3/5. Catalyzes the interconversion of 2-phosphoglycerate and 3-phosphoglycerate. The chain is 2,3-bisphosphoglycerate-independent phosphoglycerate mutase from Mesomycoplasma hyopneumoniae (strain 232) (Mycoplasma hyopneumoniae).